A 314-amino-acid polypeptide reads, in one-letter code: Putative S-adenosyl-L-methionine-dependent methyltransferase MAV_4441 (314 aa).

Residues D138 and 167–168 contribute to the S-adenosyl-L-methionine site; that span reads DL.

This sequence belongs to the UPF0677 family.

Its function is as follows. Exhibits S-adenosyl-L-methionine-dependent methyltransferase activity. This chain is Putative S-adenosyl-L-methionine-dependent methyltransferase MAV_4441, found in Mycobacterium avium (strain 104).